We begin with the raw amino-acid sequence, 149 residues long: Large ribosomal subunit protein bL20m (149 aa).

A mitochondrion-targeting transit peptide spans methionine 1–tryptophan 9.

The protein belongs to the bacterial ribosomal protein bL20 family. In terms of assembly, component of the mitochondrial large ribosomal subunit (mt-LSU). Mature mammalian 55S mitochondrial ribosomes consist of a small (28S) and a large (39S) subunit. The 28S small subunit contains a 12S ribosomal RNA (12S mt-rRNA) and 30 different proteins. The 39S large subunit contains a 16S rRNA (16S mt-rRNA), a copy of mitochondrial valine transfer RNA (mt-tRNA(Val)), which plays an integral structural role, and 52 different proteins. Interacts with OXA1L.

It is found in the mitochondrion. The chain is Large ribosomal subunit protein bL20m (MRPL20) from Homo sapiens (Human).